Consider the following 1093-residue polypeptide: Atos homolog protein A (1093 aa).

Residues 29–37 (ALLITEGRT) form a transactivation domain 1 (TAD1) region. Disordered stretches follow at residues 396-479 (AGRP…GNPL), 558-579 (SSKS…GESK), and 746-788 (HDNF…GSMR). The span at 746–763 (HDNFKNKNRQDKTKAAHD) shows a compositional bias: basic and acidic residues. A required for macropage invasion region spans residues 895–952 (LLGNFEESVLNFRLDPLGIVEGFTAEVGASGVFCPTHMTLPVEVSFYSVSDDNAPSPY). Positions 979-987 (FNPNKTVVK) are transactivation domain 2 (TAD2).

This sequence belongs to the ATOS family.

It is found in the nucleus. In terms of biological role, transcription regulator that syncronizes transcriptional and translational programs to promote macrophage invasion of tissues. This Gallus gallus (Chicken) protein is Atos homolog protein A (ATOSA).